We begin with the raw amino-acid sequence, 541 residues long: MAKQIKYGEEARRALERGVNAVADTVKVTLGPRGRNVVLDKKYGSPTVTNDGVTIAREIELEDPFENQGAQLLKEVATKTNDVAGDGTTTATLLAQAMVREGLKNLAAGANPMLLRRGIAKAVDAAVEGLKRISKPIDNKESIAHVASISAADEEIGNLIAEAMDKVGKDGVITVEESKTLGTTLEVVEGMQFDRGYISPYMVTDAEKMEAVLEEPVILITDKKLSNIQDLLPLLEQVVQHGKKLLIIADDVEGEALATLVVNKLRGTFTCVAVKAPGFGDRRKEMLQDIAILTGGQVISEELGYDLKDVRLDMLGRARQVKVTKENTTIVGGAGDAAEIKKRVNQIKAQIEETTSDYDREKLQERLAKLAGGVAVIQAGAATETELKEKKHRIEDALAATKAAVEEGIVPGGGIALLNVIEDVQKVVDSLDGDFKTGAKIVLRALEEPVRQIAANAGVDGSVIVEKIKAAKDPNFGYDAYKEEFTDMFKAGIVDPTKVTRTALQNAASIASMILTTEAVVVDVPEKNTAMPNPGAGMDMM.

ATP is bound by residues 29–32 (TLGP), 86–90 (DGTTT), glycine 413, and aspartate 495.

Belongs to the chaperonin (HSP60) family. As to quaternary structure, forms a cylinder of 14 subunits composed of two heptameric rings stacked back-to-back. Interacts with the co-chaperonin GroES.

It localises to the cytoplasm. It carries out the reaction ATP + H2O + a folded polypeptide = ADP + phosphate + an unfolded polypeptide.. Its function is as follows. Together with its co-chaperonin GroES, plays an essential role in assisting protein folding. The GroEL-GroES system forms a nano-cage that allows encapsulation of the non-native substrate proteins and provides a physical environment optimized to promote and accelerate protein folding. The sequence is that of Chaperonin GroEL from Thermoanaerobacter pseudethanolicus (strain ATCC 33223 / 39E) (Clostridium thermohydrosulfuricum).